A 688-amino-acid polypeptide reads, in one-letter code: Elongation factor G (688 aa).

A tr-type G domain is found at 8 to 282 (EKTRNIGIMA…AIIDYLPSPM (275 aa)). Residues 17–24 (AHIDAGKT), 81–85 (DTPGH), and 135–138 (NKMD) contribute to the GTP site.

The protein belongs to the TRAFAC class translation factor GTPase superfamily. Classic translation factor GTPase family. EF-G/EF-2 subfamily.

It is found in the cytoplasm. In terms of biological role, catalyzes the GTP-dependent ribosomal translocation step during translation elongation. During this step, the ribosome changes from the pre-translocational (PRE) to the post-translocational (POST) state as the newly formed A-site-bound peptidyl-tRNA and P-site-bound deacylated tRNA move to the P and E sites, respectively. Catalyzes the coordinated movement of the two tRNA molecules, the mRNA and conformational changes in the ribosome. This chain is Elongation factor G, found in Phytoplasma mali (strain AT).